A 396-amino-acid chain; its full sequence is Apolipoprotein A-IV (396 aa).

The first 20 residues, 1 to 20 (MFLKAVVLTLALVAVAGARA), serve as a signal peptide directing secretion. 13 consecutive repeat copies span residues 33–54 (DYFS…KSEL), 60–81 (ALFQ…KKLV), 82–103 (PFAT…EEIG), 115–136 (PHAN…QRLE), 137–158 (PYAD…RQLT), 159–180 (PYAQ…ASLR), 181–202 (PHAD…GRLT), 203–224 (PYAD…RSLA), 225–246 (PYAQ…FQMK), 247–268 (KNAE…QRLA), 269–286 (PLAE…EGLQ), 287–308 (KSLA…RRVE), and 309–330 (PYGE…QKLG). Positions 33–330 (DYFSQLSNNA…QMEQLRQKLG (298 aa)) are 13 X 22 AA approximate tandem repeats. The segment at 361–396 (KESQDKTLSLPELEQQQEQQQEQQQEQVQMLAPLES) is disordered. The segment covering 374 to 389 (EQQQEQQQEQQQEQVQ) has biased composition (low complexity).

It belongs to the apolipoprotein A1/A4/E family. As to quaternary structure, homodimer. Phosphorylation sites are present in the extracellular medium. As to expression, synthesized primarily in the intestine and secreted in plasma.

Its subcellular location is the secreted. In terms of biological role, may have a role in chylomicrons and VLDL secretion and catabolism. Required for efficient activation of lipoprotein lipase by ApoC-II; potent activator of LCAT. Apoa-IV is a major component of HDL and chylomicrons. This chain is Apolipoprotein A-IV, found in Homo sapiens (Human).